An 88-amino-acid polypeptide reads, in one-letter code: Small ribosomal subunit protein uS15 (88 aa).

This sequence belongs to the universal ribosomal protein uS15 family. As to quaternary structure, part of the 30S ribosomal subunit. Forms a bridge to the 50S subunit in the 70S ribosome, contacting the 23S rRNA.

One of the primary rRNA binding proteins, it binds directly to 16S rRNA where it helps nucleate assembly of the platform of the 30S subunit by binding and bridging several RNA helices of the 16S rRNA. Functionally, forms an intersubunit bridge (bridge B4) with the 23S rRNA of the 50S subunit in the ribosome. This chain is Small ribosomal subunit protein uS15, found in Mycoplasmopsis agalactiae (strain NCTC 10123 / CIP 59.7 / PG2) (Mycoplasma agalactiae).